Consider the following 201-residue polypeptide: MYB-like transcription factor EOBI (201 aa).

HTH myb-type domains follow at residues 10–62 and 63–117; these read DVEV…LNYL and RPDV…QKHI. DNA-binding regions (H-T-H motif) lie at residues 38–62 and 90–113; these read WNSLARSAGLKRTGKSCRLRWLNYL and WSKIAKHLPGRTDNEIKNYWRTRI. Residues 121–170 are disordered; the sequence is DQNMKKPSKCEQNDQKAISTSQASTGPTDTIDSYSPSSYTENTNNNMENI. Over residues 135 to 159 the composition is skewed to polar residues; the sequence is QKAISTSQASTGPTDTIDSYSPSSY. Residues 160–169 are compositionally biased toward low complexity; the sequence is TENTNNNMEN.

In terms of tissue distribution, expressed exclusively in flower organs. Accumulates mostly in flower limbs, to a lower extent in pistils and flower tubes, and, at low levels, in stamens.

It is found in the nucleus. Its function is as follows. MYB-type transcription factor controlling the production of volatile organic compounds (VOCs), including floral volatile benzenoids and phenylpropanoids (FVBP), in flowers of fragrant cultivars (e.g. cv. Mitchell and cv. V26) by regulating the expression of ODO1, a key regulator of the shikimate pathway, and of several biosynthetic floral scent-related genes (e.g. IGS, EGS, BSMT1, BSMT2, PAL1, PAL2, EPSPS, DAHPS, CS, CM1, ADT1 and PPA-AT). Binds to and activates the promoters of at least ODO1, IGS1 and PAL1. The protein is MYB-like transcription factor EOBI of Petunia hybrida (Petunia).